A 245-amino-acid polypeptide reads, in one-letter code: Glutathione S-transferase T1 (245 aa).

Residues 2 to 83 (MKLKVYADRM…YLSSAFPSVA (82 aa)) enclose the GST N-terminal domain. Residues 12 to 13 (SQ), 41 to 42 (QL), 54 to 55 (KV), and 67 to 68 (ES) contribute to the glutathione site. The region spanning 90 to 233 (DLSKRAKIHS…KEGFQKRREM (144 aa)) is the GST C-terminal domain. A Microbody targeting signal motif is present at residues 243–245 (SKI).

Belongs to the GST superfamily. Theta family.

Its subcellular location is the nucleus. It localises to the peroxisome. The catalysed reaction is RX + glutathione = an S-substituted glutathione + a halide anion + H(+). In terms of biological role, in vitro, possesses glutathione S-transferase activity toward 1-chloro-2,4-dinitrobenzene (CDNB) and p-nitrobenzyl chloride (pNBC), and glutathione peroxidase activity toward cumene hydroperoxide and linoleic acid-13-hydroperoxide. May be involved in the conjugation of reduced glutathione to a wide number of exogenous and endogenous hydrophobic electrophiles and have a detoxification role against certain herbicides. This chain is Glutathione S-transferase T1 (GSTT1), found in Arabidopsis thaliana (Mouse-ear cress).